Consider the following 144-residue polypeptide: Large ribosomal subunit protein uL15 (144 aa).

Residues 1 to 53 (MRLNTLSPAVGAKSAPKRVGRGIGSGLGKTAGRGHKGQKSRSGGGVRPGFEGG) are disordered. Gly residues-rich tracts occupy residues 21 to 31 (RGIGSGLGKTA) and 42 to 52 (SGGGVRPGFEG).

It belongs to the universal ribosomal protein uL15 family. In terms of assembly, part of the 50S ribosomal subunit.

Functionally, binds to the 23S rRNA. The sequence is that of Large ribosomal subunit protein uL15 from Shewanella amazonensis (strain ATCC BAA-1098 / SB2B).